Consider the following 772-residue polypeptide: Potassium transporter 24 (772 aa).

The Cytoplasmic segment spans residues 1 to 23; it reads MDVEGGGAAARRKGGWWWWREEA. The helical transmembrane segment at 24-44 threads the bilayer; sequence VLAYQSLGVVYGEVAAAPLYV. The Extracellular portion of the chain corresponds to 45–66; it reads YRSAFAGGDIEHSAGNEEIYGA. Residues 67–87 form a helical membrane-spanning segment; the sequence is LSLVFWTLTLVPLAKYVLLVL. Over 88–150 the chain is Cytoplasmic; that stretch reads RADDAGEGGT…ALERHRVLQR (63 aa). Residues 151–171 traverse the membrane as a helical segment; the sequence is LLLLLALLGTCMVIGDGVLTP. Over 172-192 the chain is Extracellular; the sequence is AVSVFSAVSGLELSMDKDQHK. The chain crosses the membrane as a helical span at residues 193–213; that stretch reads YILLPITCVILVCLFALQHYG. Over 214–216 the chain is Cytoplasmic; the sequence is THR. The helical transmembrane segment at 217 to 237 threads the bilayer; sequence VGFLFAPIVCLWLLCISIIGV. Over 238-265 the chain is Extracellular; the sequence is YNIIHWNPHVYQALSPYYMYKFLRKTQT. A helical transmembrane segment spans residues 266–286; that stretch reads GGWMSLGGILLCVTGSEAMYA. Over 287-298 the chain is Cytoplasmic; it reads DLGHFTQNSIKM. Residues 299 to 319 traverse the membrane as a helical segment; sequence AFTLLVYPALVLAYMGQAAYI. Residues 320 to 344 lie on the Extracellular side of the membrane; it reads SRHHNFEDGSHIGFYVSVPEKIRWP. The chain crosses the membrane as a helical span at residues 345–365; it reads VLGIAILASVVGSQAIITGTF. The Cytoplasmic segment spans residues 366 to 392; sequence SIIKQCSSLNCFPRVKIVHTSSTVHGQ. Residues 393 to 413 form a helical membrane-spanning segment; it reads IYIPEINWILMILCLSVTIGF. Residues 414–423 lie on the Extracellular side of the membrane; it reads RDTKHLTNAQ. Residues 424–444 traverse the membrane as a helical segment; that stretch reads GLAVITVMLVTTCLMSLVILL. Topologically, residues 445 to 449 are cytoplasmic; that stretch reads CWNKS. Residues 450–470 form a helical membrane-spanning segment; the sequence is IVYALSFLLFFGAIEVIYFAA. The Extracellular segment spans residues 471–477; that stretch reads SLVKFHE. Residues 478 to 498 traverse the membrane as a helical segment; sequence GAWVPVTLSFIFMMVMCVWHY. Residues 499–772 are Cytoplasmic-facing; sequence GTKKKYEFDV…TVEVGMICLV (274 aa). Positions 656–684 are disordered; that stretch reads EEGEFDGSDSTGSSAHKEINPNTTAPKPK.

Belongs to the HAK/KUP transporter (TC 2.A.72.3) family.

It localises to the membrane. High-affinity potassium transporter. The polypeptide is Potassium transporter 24 (HAK24) (Oryza sativa subsp. japonica (Rice)).